A 507-amino-acid polypeptide reads, in one-letter code: Protein phosphatase 1J (507 aa).

Disordered regions lie at residues 1-102 (MLNR…RLPW) and 197-220 (LCLP…PQSC). Low complexity predominate over residues 14-23 (SSGGTSSQRS). At threonine 41 the chain carries Phosphothreonine. A compositionally biased stretch (polar residues) spans 59–73 (TAETTVSFSRPTFLQ). A phosphoserine mark is found at serine 65 and serine 75. In terms of domain architecture, PPM-type phosphatase spans 103 to 499 (STGYAEVINA…DDISVFVIPL (397 aa)). Over residues 199–212 (LPSTPGTPGAPSPS) the composition is skewed to low complexity.

The protein belongs to the PP2C family. As to quaternary structure, interacts with UBE2I/UBC9. In terms of tissue distribution, specifically expressed in the testicular germ cells.

It catalyses the reaction O-phospho-L-seryl-[protein] + H2O = L-seryl-[protein] + phosphate. The catalysed reaction is O-phospho-L-threonyl-[protein] + H2O = L-threonyl-[protein] + phosphate. The polypeptide is Protein phosphatase 1J (Ppm1j) (Mus musculus (Mouse)).